The following is a 143-amino-acid chain: Type II secretion system core protein G (143 aa).

The propeptide at 1-8 (MQKRRQSG) is leader sequence. Residue Phe-9 is modified to N-methylphenylalanine. A helical membrane pass occupies residues 9 to 29 (FTLLEVMVVIVILGILASLVV). The segment at 70-92 (QGLDALVNKPTAAPEPRSYRDGG) is disordered.

Belongs to the GSP G family. In terms of assembly, type II secretion system is composed of four main components: the outer membrane complex, the inner membrane complex, the cytoplasmic secretion ATPase and the periplasm-spanning pseudopilus. Forms homomultimers. Post-translationally, cleaved by the prepilin peptidase. Methylated by prepilin peptidase at the amino group of the N-terminal phenylalanine once the leader sequence is cleaved.

Its subcellular location is the cell inner membrane. Core component of the type II secretion system required for the energy-dependent secretion of extracellular factors such as proteases and toxins from the periplasm. Pseudopilin (pilin-like) protein that polymerizes to form the pseudopilus. Further polymerization triggers pseudopilus growth. The protein is Type II secretion system core protein G (exeG) of Aeromonas hydrophila.